The following is a 427-amino-acid chain: Enolase (427 aa).

Residue Q163 coordinates (2R)-2-phosphoglycerate. Residue E205 is the Proton donor of the active site. 3 residues coordinate Mg(2+): D242, E285, and D312. (2R)-2-phosphoglycerate is bound by residues K337, R366, S367, and K388. K337 (proton acceptor) is an active-site residue.

It belongs to the enolase family. Mg(2+) serves as cofactor.

Its subcellular location is the cytoplasm. The protein localises to the secreted. It is found in the cell surface. The enzyme catalyses (2R)-2-phosphoglycerate = phosphoenolpyruvate + H2O. The protein operates within carbohydrate degradation; glycolysis; pyruvate from D-glyceraldehyde 3-phosphate: step 4/5. Its function is as follows. Catalyzes the reversible conversion of 2-phosphoglycerate (2-PG) into phosphoenolpyruvate (PEP). It is essential for the degradation of carbohydrates via glycolysis. The sequence is that of Enolase from Burkholderia vietnamiensis (strain G4 / LMG 22486) (Burkholderia cepacia (strain R1808)).